The primary structure comprises 925 residues: NADH:fumarate oxidoreductase (925 aa).

Residue T447 is modified to FMN phosphoryl threonine. FAD contacts are provided by A492, E511, N519, T520, A525, G526, and V633. A525 is a fumarate binding site. Position 525 (A525) interacts with succinate. Residues H719, S731, and E732 each contribute to the succinate site. 2 residues coordinate fumarate: S731 and E732. R756 functions as the Proton donor in the catalytic mechanism. H859 contacts fumarate. Residue H859 coordinates succinate. FAD contacts are provided by H860 and E889. R899 and G902 together coordinate fumarate. Succinate contacts are provided by R899 and G902. Residues A904 and V905 each contribute to the FAD site.

This sequence belongs to the FAD-dependent oxidoreductase 2 family. FRD/SDH subfamily. In terms of assembly, monomer. The cofactor is FAD. Requires FMN as cofactor. Is flavinylated on Thr-447 by ApbE2, encoded in a neighboring gene. Flavinylation is essential for catalytic activity.

The protein resides in the cytoplasm. It catalyses the reaction succinate + NAD(+) = fumarate + NADH + H(+). In terms of biological role, catalyzes the anaerobic reduction of fumarate to succinate. Uses NADH as the inherent electron donor in this process. Is involved in anaerobic fumarate respiration in K.pneumoniae. This Klebsiella pneumoniae (strain 342) protein is NADH:fumarate oxidoreductase.